The chain runs to 209 residues: C-type lectin domain family 6 member A (209 aa).

Residues 1-20 (MVQERQSQGKGVCWTLRLWS) lie on the Cytoplasmic side of the membrane. Residues 21–43 (AAVISMLLLSTCFIASCVVTYQF) form a helical; Signal-anchor for type II membrane protein membrane-spanning segment. The Extracellular portion of the chain corresponds to 44 to 209 (IMDQPSRRLY…SICEMKKIYL (166 aa)). Intrachain disulfides connect Cys-64–Cys-78, Cys-79–Cys-90, Cys-107–Cys-202, and Cys-176–Cys-194. One can recognise a C-type lectin domain in the interval 86-203 (FGSSCYLIST…CDSKHNSICE (118 aa)). Val-116, Asn-118, and Glu-122 together coordinate Ca(2+). An N-linked (GlcNAc...) asparagine glycan is attached at Asn-131. Ca(2+) contacts are provided by Glu-168, Asn-170, and Glu-174. Alpha-D-mannopyranose contacts are provided by residues 168-170 (EPN), Glu-174, Trp-182, and 190-191 (ND). 3 residues coordinate Ca(2+): Asn-190, Asp-191, and Glu-203.

As to quaternary structure, associated with FCER1G. Heterodimer with CLEC4D; this heterodimer forms a pattern recognition receptor (PRR) against fungal infection. Expressed by the XS52 DC (dendritic cell) line (at protein level). Expressed constitutively by the epidermis, and skin resident DC appear to be the major source of this expression. Expressed in the spleen and thymus. Expression was undetectable in non-DC lines, including macrophage lines (J774 and Raw), T-cell lines (7-17, HDK-1, and D10), B-cell hybridoma (5C5), a keratinocyte line (Pam 212), and a fibroblast line (NS01).

The protein localises to the cell membrane. Calcium-dependent lectin that acts as a pattern recognition receptor (PRR) of the innate immune system: specifically recognizes and binds alpha-mannans on C.albicans hypheas. Binding of C.albicans alpha-mannans to this receptor complex leads to phosphorylation of the immunoreceptor tyrosine-based activation motif (ITAM) of FCER1G, triggering activation of SYK, CARD9 and NF-kappa-B, consequently driving maturation of antigen-presenting cells and shaping antigen-specific priming of T-cells toward effector T-helper 1 and T-helper 17 cell subtypes. Also recognizes, in a mannose-dependent manner, allergens from house dust mite and fungi, by promoting cysteinyl leukotriene production. Recognizes soluble elements from the eggs of Shistosoma mansoni altering adaptive immune responses. This is C-type lectin domain family 6 member A from Mus musculus (Mouse).